A 214-amino-acid polypeptide reads, in one-letter code: Octanoyltransferase (214 aa).

The region spanning 35–211 is the BPL/LPL catalytic domain; the sequence is KSNMNFIWLG…IIHEEFNFNF (177 aa). Residues 75-82, 142-144, and 155-157 contribute to the substrate site; these read RGGEVTCH, SIG, and GFS. Cys173 acts as the Acyl-thioester intermediate in catalysis.

This sequence belongs to the LipB family.

Its subcellular location is the cytoplasm. The catalysed reaction is octanoyl-[ACP] + L-lysyl-[protein] = N(6)-octanoyl-L-lysyl-[protein] + holo-[ACP] + H(+). The protein operates within protein modification; protein lipoylation via endogenous pathway; protein N(6)-(lipoyl)lysine from octanoyl-[acyl-carrier-protein]: step 1/2. Its function is as follows. Catalyzes the transfer of endogenously produced octanoic acid from octanoyl-acyl-carrier-protein onto the lipoyl domains of lipoate-dependent enzymes. Lipoyl-ACP can also act as a substrate although octanoyl-ACP is likely to be the physiological substrate. The polypeptide is Octanoyltransferase (Prochlorococcus marinus subsp. pastoris (strain CCMP1986 / NIES-2087 / MED4)).